The primary structure comprises 300 residues: MSYRELVAELPREHAEALSDALVELGALSVSVEDADADTPDEQPLFGEPGLVPERTAWQHSRVIALVDATQDPAVLLAAAANEAGLAQAPRFELREVEEQDWVRLTQSQFEPIHIGEKIWVVPSWHDAPQPDALVLELDPGLAFGTGSHPTTRLCMEWLEQTVQPGQTVLDYGCGSGILAILAKKCGAGRVTGIDIDPQAVEAARHNSERNRADVTYGLPDDCPDGEFDIVVANILSNPLKLMASMLASKVKPGGRIALSGVLARQADEVASVYARYIDIAVWREHEGWVCLAGTRRESH.

Positions 152, 173, 195, and 234 each coordinate S-adenosyl-L-methionine.

The protein belongs to the methyltransferase superfamily. PrmA family.

The protein resides in the cytoplasm. The enzyme catalyses L-lysyl-[protein] + 3 S-adenosyl-L-methionine = N(6),N(6),N(6)-trimethyl-L-lysyl-[protein] + 3 S-adenosyl-L-homocysteine + 3 H(+). Methylates ribosomal protein L11. The polypeptide is Ribosomal protein L11 methyltransferase (Burkholderia pseudomallei (strain 1710b)).